The following is a 611-amino-acid chain: Pescadillo homolog (611 aa).

The tract at residues 310–335 (VQMGDPDEASPGEEEQFVAHASKSAP) is disordered. The span at 314-325 (DPDEASPGEEEQ) shows a compositional bias: acidic residues. One can recognise a BRCT domain in the interval 354–455 (PSSRLFAPYT…KILLEDTYAQ (102 aa)). Disordered stretches follow at residues 469 to 506 (YEGA…ESNT) and 545 to 611 (VKKA…AGGK). A compositionally biased stretch (acidic residues) spans 482-498 (ADMDVETDGEEGEADAS). Composition is skewed to basic and acidic residues over residues 552–569 (KKPD…KDMN) and 579–602 (KLYE…EQRK). Positions 580-609 (LYEKMKYSQQKKAAEKEKLEQRKKQLQKAG) form a coiled coil.

This sequence belongs to the pescadillo family. In terms of assembly, component of the NOP7 complex, composed of ERB1, NOP7 and YTM1. The complex is held together by ERB1, which interacts with NOP7 via its N-terminal domain and with YTM1 via a high-affinity interaction between the seven-bladed beta-propeller domains of the 2 proteins. The NOP7 complex associates with the 66S pre-ribosome.

The protein localises to the nucleus. It localises to the nucleolus. It is found in the nucleoplasm. Component of the NOP7 complex, which is required for maturation of the 25S and 5.8S ribosomal RNAs and formation of the 60S ribosome. This chain is Pescadillo homolog, found in Coprinopsis cinerea (strain Okayama-7 / 130 / ATCC MYA-4618 / FGSC 9003) (Inky cap fungus).